Consider the following 397-residue polypeptide: Riboflavin biosynthesis protein RibBA (397 aa).

Residues 1–199 (MFHRIEEALE…IEDLIAYRRH (199 aa)) are DHBP synthase. Residues 26-27 (RE), Asp-31, 138-142 (RAGHT), and Glu-162 contribute to the D-ribulose 5-phosphate site. Mg(2+) is bound at residue Glu-27. His-141 is a Mg(2+) binding site. The interval 200-397 (HETLVTREVE…VNKLGHLLNL (198 aa)) is GTP cyclohydrolase II. 250–254 (RVHSE) serves as a coordination point for GTP. Residues Cys-255, Cys-266, and Cys-268 each contribute to the Zn(2+) site. GTP contacts are provided by residues Gln-271, 293–295 (EGR), and Thr-315. Asp-327 serves as the catalytic Proton acceptor; for GTP cyclohydrolase activity. Arg-329 functions as the Nucleophile; for GTP cyclohydrolase activity in the catalytic mechanism. 2 residues coordinate GTP: Thr-350 and Lys-355.

In the N-terminal section; belongs to the DHBP synthase family. It in the C-terminal section; belongs to the GTP cyclohydrolase II family. Mg(2+) serves as cofactor. Requires Mn(2+) as cofactor. It depends on Zn(2+) as a cofactor.

The enzyme catalyses D-ribulose 5-phosphate = (2S)-2-hydroxy-3-oxobutyl phosphate + formate + H(+). It catalyses the reaction GTP + 4 H2O = 2,5-diamino-6-hydroxy-4-(5-phosphoribosylamino)-pyrimidine + formate + 2 phosphate + 3 H(+). It functions in the pathway cofactor biosynthesis; riboflavin biosynthesis; 2-hydroxy-3-oxobutyl phosphate from D-ribulose 5-phosphate: step 1/1. Its pathway is cofactor biosynthesis; riboflavin biosynthesis; 5-amino-6-(D-ribitylamino)uracil from GTP: step 1/4. In terms of biological role, catalyzes the conversion of D-ribulose 5-phosphate to formate and 3,4-dihydroxy-2-butanone 4-phosphate. Its function is as follows. Catalyzes the conversion of GTP to 2,5-diamino-6-ribosylamino-4(3H)-pyrimidinone 5'-phosphate (DARP), formate and pyrophosphate. In Bacillus cereus (strain ATCC 10987 / NRS 248), this protein is Riboflavin biosynthesis protein RibBA.